We begin with the raw amino-acid sequence, 125 residues long: Fluoride-specific ion channel FluC (125 aa).

A run of 4 helical transmembrane segments spans residues 4-24, 32-52, 67-87, and 100-120; these read LMLV…TVTA, AFPW…GLLV, LLLA…SLDV, and LAYV…GLWL. 2 residues coordinate Na(+): glycine 75 and threonine 78.

Belongs to the fluoride channel Fluc/FEX (TC 1.A.43) family.

It is found in the cell inner membrane. It catalyses the reaction fluoride(in) = fluoride(out). Its activity is regulated as follows. Na(+) is not transported, but it plays an essential structural role and its presence is essential for fluoride channel function. Functionally, fluoride-specific ion channel. Important for reducing fluoride concentration in the cell, thus reducing its toxicity. The polypeptide is Fluoride-specific ion channel FluC (Chelativorans sp. (strain BNC1)).